We begin with the raw amino-acid sequence, 232 residues long: Histone H1.X (232 aa).

The H15 domain occupies 36–112 (HHPSYMDMIK…GATGSFRMGK (77 aa)). The interval 142–232 (ISKAEKTKPS…LRTGTRKSYC (91 aa)) is disordered. The span at 159–197 (KKGKPISTMKKRGVMSKKRSSKNKMAPKAKSHGLKKKGP) shows a compositional bias: basic residues.

It belongs to the histone H1/H5 family.

The protein resides in the nucleus. It is found in the chromosome. In Caenorhabditis elegans, this protein is Histone H1.X (hil-1).